A 193-amino-acid polypeptide reads, in one-letter code: Putative histone H2B type 2-C (193 aa).

Over residues 1-12 (MPEPAKFAPAPK) the composition is skewed to low complexity. The tract at residues 1-33 (MPEPAKFAPAPKKGSKKAVTKAQKKDGKKRKRS) is disordered. Residue Pro2 is modified to N-acetylproline. Lys6 carries the N6-(2-hydroxyisobutyryl)lysine; alternate modification. Lys6 and Lys12 each carry N6-(beta-hydroxybutyryl)lysine; alternate. Lys6, Lys12, and Lys13 each carry N6-acetyllysine; alternate. Lys6 carries the N6-butyryllysine; alternate modification. 3 positions are modified to N6-crotonyllysine; alternate: Lys6, Lys12, and Lys13. N6-lactoyllysine; alternate is present on residues Lys6 and Lys12. Residue Lys6 forms a Glycyl lysine isopeptide (Lys-Gly) (interchain with G-Cter in SUMO2); alternate linkage. N6-(2-hydroxyisobutyryl)lysine; alternate is present on Lys13. Residue Ser15 is modified to Phosphoserine; by STK4/MST1. N6-acetyllysine; alternate occurs at positions 16, 17, 21, and 24. N6-crotonyllysine; alternate occurs at positions 16, 17, 21, and 24. An N6-lactoyllysine; alternate mark is found at Lys16, Lys17, Lys21, and Lys24. N6-(beta-hydroxybutyryl)lysine; alternate is present on residues Lys17 and Lys21. Lys17 is modified (N6-glutaryllysine; alternate). An N6-(2-hydroxyisobutyryl)lysine; alternate mark is found at Lys21 and Lys24. Lys21 is subject to N6-butyryllysine; alternate. Lys21 is covalently cross-linked (Glycyl lysine isopeptide (Lys-Gly) (interchain with G-Cter in SUMO2); alternate). Lys25 carries the post-translational modification N6-(2-hydroxyisobutyryl)lysine. Lys35 is subject to N6-(2-hydroxyisobutyryl)lysine; alternate. Lys35 carries the post-translational modification N6-(beta-hydroxybutyryl)lysine; alternate. Position 35 is an N6-crotonyllysine; alternate (Lys35). At Lys35 the chain carries N6-glutaryllysine; alternate. An N6-succinyllysine; alternate modification is found at Lys35. Lys35 is covalently cross-linked (Glycyl lysine isopeptide (Lys-Gly) (interchain with G-Cter in ubiquitin); alternate). Ser37 carries the phosphoserine; by AMPK modification. 3 positions are modified to N6-(2-hydroxyisobutyryl)lysine; alternate: Lys44, Lys47, and Lys58. An N6-lactoyllysine; alternate modification is found at Lys44. N6-glutaryllysine; alternate is present on residues Lys44 and Lys47. Position 47 is an N6-methyllysine; alternate (Lys47). The residue at position 58 (Lys58) is an N6,N6-dimethyllysine; alternate. Arg80 is subject to Dimethylated arginine. Lys86 is subject to N6-(2-hydroxyisobutyryl)lysine; alternate. The residue at position 86 (Lys86) is an N6-(beta-hydroxybutyryl)lysine; alternate. At Lys86 the chain carries N6-acetyllysine; alternate. Lys86 is subject to N6-lactoyllysine; alternate. Position 86 is an N6,N6,N6-trimethyllysine; alternate (Lys86). An omega-N-methylarginine mark is found at Arg87 and Arg93. Residues 111–136 (PCPRAPRRSPSTPAPSESLPGPGARS) form a disordered region.

This sequence belongs to the histone H2B family. In terms of assembly, the nucleosome is a histone octamer containing two molecules each of H2A, H2B, H3 and H4 assembled in one H3-H4 heterotetramer and two H2A-H2B heterodimers. The octamer wraps approximately 147 bp of DNA. In terms of processing, phosphorylation at Ser-37 (H2BS36ph) by AMPK in response to stress promotes transcription. Phosphorylated on Ser-15 (H2BS14ph) by STK4/MST1 during apoptosis; which facilitates apoptotic chromatin condensation. Also phosphorylated on Ser-15 in response to DNA double strand breaks (DSBs), and in correlation with somatic hypermutation and immunoglobulin class-switch recombination. Crotonylation (Kcr) is specifically present in male germ cells and marks testis-specific genes in post-meiotic cells, including X-linked genes that escape sex chromosome inactivation in haploid cells. Crotonylation marks active promoters and enhancers and confers resistance to transcriptional repressors. It is also associated with post-meiotically activated genes on autosomes. Post-translationally, lactylated in macrophages by EP300/P300 by using lactoyl-CoA directly derived from endogenous or exogenous lactate, leading to stimulates gene transcription.

The protein localises to the nucleus. It is found in the chromosome. In terms of biological role, core component of nucleosome. Nucleosomes wrap and compact DNA into chromatin, limiting DNA accessibility to the cellular machineries which require DNA as a template. Histones thereby play a central role in transcription regulation, DNA repair, DNA replication and chromosomal stability. DNA accessibility is regulated via a complex set of post-translational modifications of histones, also called histone code, and nucleosome remodeling. The protein is Putative histone H2B type 2-C of Homo sapiens (Human).